A 207-amino-acid chain; its full sequence is Superoxide dismutase [Mn] (207 aa).

His30, His78, Asp166, and His170 together coordinate Mn(2+).

This sequence belongs to the iron/manganese superoxide dismutase family. As to quaternary structure, homodimer. The cofactor is Mn(2+).

It carries out the reaction 2 superoxide + 2 H(+) = H2O2 + O2. Its function is as follows. Destroys superoxide anion radicals which are normally produced within the cells and which are toxic to biological systems. The protein is Superoxide dismutase [Mn] (sodA) of Chlamydia pneumoniae (Chlamydophila pneumoniae).